Consider the following 193-residue polypeptide: Segregation and condensation protein B (193 aa).

The protein belongs to the ScpB family. As to quaternary structure, homodimer. Homodimerization may be required to stabilize the binding of ScpA to the Smc head domains. Component of a cohesin-like complex composed of ScpA, ScpB and the Smc homodimer, in which ScpA and ScpB bind to the head domain of Smc. The presence of the three proteins is required for the association of the complex with DNA.

The protein localises to the cytoplasm. In terms of biological role, participates in chromosomal partition during cell division. May act via the formation of a condensin-like complex containing Smc and ScpA that pull DNA away from mid-cell into both cell halves. The polypeptide is Segregation and condensation protein B (Clostridium botulinum (strain ATCC 19397 / Type A)).